The primary structure comprises 169 residues: Peptide deformylase (169 aa).

Residues C91 and H133 each coordinate Fe cation. E134 is a catalytic residue. H137 provides a ligand contact to Fe cation.

It belongs to the polypeptide deformylase family. The cofactor is Fe(2+).

It carries out the reaction N-terminal N-formyl-L-methionyl-[peptide] + H2O = N-terminal L-methionyl-[peptide] + formate. Removes the formyl group from the N-terminal Met of newly synthesized proteins. Requires at least a dipeptide for an efficient rate of reaction. N-terminal L-methionine is a prerequisite for activity but the enzyme has broad specificity at other positions. This chain is Peptide deformylase, found in Haemophilus influenzae (strain ATCC 51907 / DSM 11121 / KW20 / Rd).